An 82-amino-acid chain; its full sequence is MAHKKGASSSRNGRDSNAKRLGVKRFAGQVVSAGEILVRQRGTRFHPGTNVRRGDDDTLFACASGRVRFGRSGKRRAVSVDT.

The tract at residues 1 to 21 (MAHKKGASSSRNGRDSNAKRL) is disordered.

The protein belongs to the bacterial ribosomal protein bL27 family.

The sequence is that of Large ribosomal subunit protein bL27 from Tropheryma whipplei (strain TW08/27) (Whipple's bacillus).